The primary structure comprises 123 residues: MVLPLSLLKTAQNHPMLVELKNGETYNGHLKACDSWMNIHLVDVIFTSKDGDKFFKMSEAYVRGSTIKYLRIPETVVDLVKTEVNEVRRQQQREQSRGRGGGRGGRGGHRGGGGNRGGRGGAR.

The 74-residue stretch at 3-76 (LPLSLLKTAQ…IKYLRIPETV (74 aa)) folds into the Sm domain. The segment covering 85–97 (NEVRRQQQREQSR) has biased composition (basic and acidic residues). Residues 85–123 (NEVRRQQQREQSRGRGGGRGGRGGHRGGGGNRGGRGGAR) are disordered. Residues 98 to 123 (GRGGGRGGRGGHRGGGGNRGGRGGAR) are compositionally biased toward gly residues.

It belongs to the snRNP Sm proteins family. Component of the precatalytic spliceosome (spliceosome B complex). Component of the U4/U6-U5 tri-snRNP complex, a building block of the precatalytic spliceosome (spliceosome B complex). LSM2, LSM3, LSM4, LSM5, LSM6, LSM7 and LSM8 form a heptameric, ring-shaped subcomplex (the LSM2-8 complex) that is part of the U4/U6-U5 tri-snRNP complex and the precatalytic spliceosome.

The protein resides in the nucleus. In terms of biological role, plays a role in pre-mRNA splicing as component of the U4/U6-U5 tri-snRNP complex that is involved in spliceosome assembly, and as component of the precatalytic spliceosome (spliceosome B complex). The heptameric LSM2-8 complex binds specifically to the 3'-terminal U-tract of U6 snRNA. In Caenorhabditis elegans, this protein is Probable U6 snRNA-associated Sm-like protein LSm4 (lsm-4).